The chain runs to 276 residues: Cerberus (276 aa).

The first 20 residues, 1 to 20 (MLLCVLKIYIIFCLVNDGAG), serve as a signal peptide directing secretion. N-linked (GlcNAc...) asparagine glycans are attached at residues asparagine 103, asparagine 118, and asparagine 160. Cystine bridges form between cysteine 175-cysteine 221, cysteine 189-cysteine 235, cysteine 199-cysteine 251, and cysteine 203-cysteine 253. The region spanning 175-259 (CKTLPFTQNI…ECACEAHKNN (85 aa)) is the CTCK domain. Asparagine 234 is a glycosylation site (N-linked (GlcNAc...) asparagine).

Belongs to the DAN family. In terms of assembly, the long chain interacts with nodal/nr-1, bmp4 and wnt8, thereby inhibiting their function. The short chain interacts with nodal/nr-1 but not bmp4 or wnt8. In terms of tissue distribution, expressed in the anterior endomesoderm of the early gastrula with expression expanded laterally around the margin at the endoderm/mesoderm boundary.

Its subcellular location is the secreted. In terms of biological role, inhibits wnt, nodal/nr-1 and bmp signaling in the embryo to promote head formation and anterior neural induction. Within the endoderm, acts as an essential mediator of nodal/nr-1-induced cardiogenesis in the overlying mesoderm. This Xenopus tropicalis (Western clawed frog) protein is Cerberus.